The following is a 20-amino-acid chain: Putative 18 kDa spermidine-binding protein (20 aa).

Dimer of 18 kDa and 60 kDa subunit.

It localises to the microsome membrane. The protein resides in the endoplasmic reticulum membrane. In terms of biological role, may have spermidine-binding activity. The polypeptide is Putative 18 kDa spermidine-binding protein (Zea mays (Maize)).